The following is a 245-amino-acid chain: Ubiquinone biosynthesis O-methyltransferase (245 aa).

S-adenosyl-L-methionine-binding residues include Arg49, Gly69, Asp90, and Met134.

This sequence belongs to the methyltransferase superfamily. UbiG/COQ3 family.

It catalyses the reaction a 3-demethylubiquinol + S-adenosyl-L-methionine = a ubiquinol + S-adenosyl-L-homocysteine + H(+). The catalysed reaction is a 3-(all-trans-polyprenyl)benzene-1,2-diol + S-adenosyl-L-methionine = a 2-methoxy-6-(all-trans-polyprenyl)phenol + S-adenosyl-L-homocysteine + H(+). It functions in the pathway cofactor biosynthesis; ubiquinone biosynthesis. O-methyltransferase that catalyzes the 2 O-methylation steps in the ubiquinone biosynthetic pathway. The chain is Ubiquinone biosynthesis O-methyltransferase from Vibrio cholerae serotype O1 (strain ATCC 39541 / Classical Ogawa 395 / O395).